Here is a 453-residue protein sequence, read N- to C-terminus: Gamma-glutamylpolyamine synthetase GlnA2 (453 aa).

Residues 15–100 (RDIRFVRLWF…MFCDILMPDG (86 aa)) form the GS beta-grasp domain. The GS catalytic domain occupies 107-453 (PRYVLKRALA…FELRKSLPVL (347 aa)). Positions 130 and 132 each coordinate Mg(2+). Glu182 is a binding site for ATP. The Mg(2+) site is built by Glu187 and Glu194. Gly239 serves as a coordination point for L-glutamate. His243 serves as a coordination point for Mg(2+). 245–247 (HLS) provides a ligand contact to ATP. L-glutamate is bound by residues Arg296, Glu310, and Arg322. The ATP site is built by Arg322 and Arg327. Glu342 provides a ligand contact to Mg(2+). Arg344 lines the L-glutamate pocket.

This sequence belongs to the glutamine synthetase family. It depends on Mg(2+) as a cofactor.

The catalysed reaction is putrescine + L-glutamate + ATP = gamma-L-glutamylputrescine + ADP + phosphate + H(+). The enzyme catalyses spermine + L-glutamate + ATP = gamma-L-glutamylspermine + ADP + phosphate + H(+). It carries out the reaction spermidine + L-glutamate + ATP = gamma-L-glutamylspermidine + ADP + phosphate + H(+). It catalyses the reaction cadaverine + L-glutamate + ATP = gamma-L-glutamylcadaverine + ADP + phosphate + H(+). Its pathway is amine and polyamine degradation; putrescine degradation. The protein operates within amine and polyamine degradation; spermidine degradation. It participates in amine and polyamine degradation; spermine degradation. No effect on activity with glutamine synthetase (GS) inhibitor methionine sulfoximine (MSO). Functionally, involved in the catabolism of polyamines. Catalyzes the ATP-dependent gamma-glutamylation of polyamines. Substrates include putrescine, cadaverine, spermidine and spermine, with a preference for short-chain polyamine putrescine. No complementation of the L-glutamine auxotrophy of an E.coli glnA mutant. Together with GlnA3, enables survival of S.coelicolor under exposure to high local environmental polyamine concentrations, which is toxic to the cells. The sequence is that of Gamma-glutamylpolyamine synthetase GlnA2 from Streptomyces coelicolor (strain ATCC BAA-471 / A3(2) / M145).